An 865-amino-acid polypeptide reads, in one-letter code: Bifunctional uridylyltransferase/uridylyl-removing enzyme (865 aa).

The tract at residues methionine 1–leucine 318 is uridylyltransferase. A uridylyl-removing region spans residues isoleucine 319–leucine 675. One can recognise an HD domain in the interval valine 437–leucine 559. ACT domains lie at glutamine 676–histidine 762 and arginine 789–alanine 865. Residues aspartate 747–arginine 767 form a disordered region. Basic residues predominate over residues alanine 751–arginine 767.

The protein belongs to the GlnD family. Mg(2+) is required as a cofactor.

It catalyses the reaction [protein-PII]-L-tyrosine + UTP = [protein-PII]-uridylyl-L-tyrosine + diphosphate. It carries out the reaction [protein-PII]-uridylyl-L-tyrosine + H2O = [protein-PII]-L-tyrosine + UMP + H(+). Its activity is regulated as follows. Uridylyltransferase (UTase) activity is inhibited by glutamine, while glutamine activates uridylyl-removing (UR) activity. In terms of biological role, modifies, by uridylylation and deuridylylation, the PII regulatory proteins (GlnB and homologs), in response to the nitrogen status of the cell that GlnD senses through the glutamine level. Under low glutamine levels, catalyzes the conversion of the PII proteins and UTP to PII-UMP and PPi, while under higher glutamine levels, GlnD hydrolyzes PII-UMP to PII and UMP (deuridylylation). Thus, controls uridylylation state and activity of the PII proteins, and plays an important role in the regulation of nitrogen assimilation and metabolism. This chain is Bifunctional uridylyltransferase/uridylyl-removing enzyme, found in Bordetella parapertussis (strain 12822 / ATCC BAA-587 / NCTC 13253).